The primary structure comprises 638 residues: SUMO-activating enzyme subunit 2 (638 aa).

Residues 24–29 (GAGGIG), D48, 56–59 (NLNR), K72, 95–96 (SI), and 117–122 (DNRAAR) contribute to the ATP site. Zn(2+)-binding residues include C158 and C161. K164 is covalently cross-linked (Glycyl lysine isopeptide (Lys-Gly) (interchain with G-Cter in SUMO1)). C173 serves as the catalytic Glycyl thioester intermediate. K190 is covalently cross-linked (Glycyl lysine isopeptide (Lys-Gly) (interchain with G-Cter in SUMO)). Residues 202–233 (ADQEVSPDRADPEAAWEPTEAEARARASNEDG) form a disordered region. Phosphoserine is present on S207. A compositionally biased stretch (basic and acidic residues) spans 222–233 (AEARARASNEDG). Residue K236 forms a Glycyl lysine isopeptide (Lys-Gly) (interchain with G-Cter in SUMO1); alternate linkage. Residues K236 and K257 each participate in a glycyl lysine isopeptide (Lys-Gly) (interchain with G-Cter in SUMO2); alternate cross-link. Glycyl lysine isopeptide (Lys-Gly) (interchain with G-Cter in SUMO); alternate cross-links involve residues K257 and K271. K271 carries the post-translational modification N6-acetyllysine; alternate. A Glycyl lysine isopeptide (Lys-Gly) (interchain with G-Cter in SUMO) cross-link involves residue K275. K369 is covalently cross-linked (Glycyl lysine isopeptide (Lys-Gly) (interchain with G-Cter in SUMO2)). K418 participates in a covalent cross-link: Glycyl lysine isopeptide (Lys-Gly) (interchain with G-Cter in SUMO1); alternate. Residue K418 forms a Glycyl lysine isopeptide (Lys-Gly) (interchain with G-Cter in SUMO2); alternate linkage. Zn(2+)-binding residues include C439 and C442. S505 is subject to Phosphoserine. Residue K538 forms a Glycyl lysine isopeptide (Lys-Gly) (interchain with G-Cter in SUMO2) linkage. Phosphoserine is present on residues S548 and S590. Over residues 548–561 (SPEKVGPKQAEDAA) the composition is skewed to basic and acidic residues. A disordered region spans residues 548–638 (SPEKVGPKQA…EDPDDVIALD (91 aa)). A compositionally biased stretch (acidic residues) spans 581–594 (EQDDVLIVDSDEEG). A compositionally biased stretch (basic and acidic residues) spans 603–614 (GDDKARKRKLEE). Residue K609 forms a Glycyl lysine isopeptide (Lys-Gly) (interchain with G-Cter in SUMO) linkage. Residue K611 forms a Glycyl lysine isopeptide (Lys-Gly) (interchain with G-Cter in SUMO); alternate linkage. Position 611 is an N6-acetyllysine; alternate (K611). Residue K621 forms a Glycyl lysine isopeptide (Lys-Gly) (interchain with G-Cter in SUMO) linkage. The segment covering 628–638 (MEDPDDVIALD) has biased composition (acidic residues).

This sequence belongs to the ubiquitin-activating E1 family. In terms of assembly, heterodimer of SAE1 and UBA2/SAE2. The heterodimer corresponds to the two domains that are encoded on a single polypeptide chain in ubiquitin-activating enzyme E1. Interacts with UBE2I. In terms of processing, sumoylated with SUMO1 and SUMO2/3 and by UBC9. Sumoylation at Lys-236 inhibits enzymatic activity. Sumoylation at the C-terminal lysine cluster plays an essential role in nuclear trafficking. Broadly expressed, with highest levels in testis.

It localises to the cytoplasm. Its subcellular location is the nucleus. It participates in protein modification; protein sumoylation. In terms of biological role, the heterodimer acts as an E1 ligase for SUMO1, SUMO2, SUMO3, and probably SUMO4. It mediates ATP-dependent activation of SUMO proteins followed by formation of a thioester bond between a SUMO protein and a conserved active site cysteine residue on UBA2/SAE2. In Mus musculus (Mouse), this protein is SUMO-activating enzyme subunit 2 (Uba2).